Consider the following 297-residue polypeptide: N-acetylmuramic acid 6-phosphate etherase (297 aa).

Residues Ala55–Lys218 enclose the SIS domain. Glu83 functions as the Proton donor in the catalytic mechanism. Glu114 is an active-site residue.

This sequence belongs to the GCKR-like family. MurNAc-6-P etherase subfamily. In terms of assembly, homodimer.

It carries out the reaction N-acetyl-D-muramate 6-phosphate + H2O = N-acetyl-D-glucosamine 6-phosphate + (R)-lactate. It participates in amino-sugar metabolism; 1,6-anhydro-N-acetylmuramate degradation. The protein operates within amino-sugar metabolism; N-acetylmuramate degradation. Its pathway is cell wall biogenesis; peptidoglycan recycling. In terms of biological role, specifically catalyzes the cleavage of the D-lactyl ether substituent of MurNAc 6-phosphate, producing GlcNAc 6-phosphate and D-lactate. Together with AnmK, is also required for the utilization of anhydro-N-acetylmuramic acid (anhMurNAc) either imported from the medium or derived from its own cell wall murein, and thus plays a role in cell wall recycling. The sequence is that of N-acetylmuramic acid 6-phosphate etherase from Enterobacter sp. (strain 638).